The following is a 250-amino-acid chain: Triosephosphate isomerase (250 aa).

9–11 (NWK) is a binding site for substrate. Histidine 94 (electrophile) is an active-site residue. Glutamate 165 (proton acceptor) is an active-site residue. Substrate contacts are provided by residues glycine 171, serine 211, and 232–233 (GG).

Belongs to the triosephosphate isomerase family. Homodimer.

The protein resides in the cytoplasm. It carries out the reaction D-glyceraldehyde 3-phosphate = dihydroxyacetone phosphate. The protein operates within carbohydrate biosynthesis; gluconeogenesis. Its pathway is carbohydrate degradation; glycolysis; D-glyceraldehyde 3-phosphate from glycerone phosphate: step 1/1. Involved in the gluconeogenesis. Catalyzes stereospecifically the conversion of dihydroxyacetone phosphate (DHAP) to D-glyceraldehyde-3-phosphate (G3P). In Alkalilimnicola ehrlichii (strain ATCC BAA-1101 / DSM 17681 / MLHE-1), this protein is Triosephosphate isomerase.